The following is an 88-amino-acid chain: Small ribosomal subunit protein uS17 (88 aa).

The protein belongs to the universal ribosomal protein uS17 family. As to quaternary structure, part of the 30S ribosomal subunit.

Its function is as follows. One of the primary rRNA binding proteins, it binds specifically to the 5'-end of 16S ribosomal RNA. The protein is Small ribosomal subunit protein uS17 of Mycoplasmopsis pulmonis (strain UAB CTIP) (Mycoplasma pulmonis).